We begin with the raw amino-acid sequence, 303 residues long: NAD kinase (303 aa).

Residue D71 is the Proton acceptor of the active site. Residues D71 to G72, N145 to D146, R156, R173, D175, T186 to S191, and Q245 contribute to the NAD(+) site.

Belongs to the NAD kinase family. Requires a divalent metal cation as cofactor.

The protein resides in the cytoplasm. It catalyses the reaction NAD(+) + ATP = ADP + NADP(+) + H(+). Functionally, involved in the regulation of the intracellular balance of NAD and NADP, and is a key enzyme in the biosynthesis of NADP. Catalyzes specifically the phosphorylation on 2'-hydroxyl of the adenosine moiety of NAD to yield NADP. The sequence is that of NAD kinase from Magnetococcus marinus (strain ATCC BAA-1437 / JCM 17883 / MC-1).